A 1217-amino-acid polypeptide reads, in one-letter code: MAILKRTNRAKAATAAAPNSTGKSNGIKKAVYTSTRKKTVGVDDLTLLSKITDEEINKNLELRFRNGEIYTYIGHVLISVNPFRDLGIYTMDILKSYQGKNRLETSPHVYAIAENAYYQMKSYHENQCIIISGESGAGKTEAAKRIMQYITHVSKSVGTEIERVSEIILATNPLLESFGCAKTLRNNNSSRHGKYLEMIFNSGGVPVGAKITNYLLEKNRIVNQVRNERNFHIFYQFTKSAPQKYRDTYGIQGPENYVYTSACQCLSVDGISDEKDFQGTMNAMKVIGITEPEQDEIFRMLSIILWLGNIQFQEGQDGGSVISDKSITEFLGYLIGVPVAAIERALTIRIMQTQHGARRGSVYEVPLNPTQALAVRDALSMAIYNCLFDWIVERVNKALVTSDNSVSNSIGILDIYGFEIFENNSFEQLCINYVNEKLQQIFIELTLKTEQEEYVREQIAWTPIKYFNNKVVCDLIESKRPPGLFAAMNDAIATAHADSAAADSAFAQRLNFLSSNPHFEQRQNQFIVKHYAGDVTYSITGMTDKNKDQLATDILNLIHSSNNEFMKSIFPVAEESNSRRRPPTAGDRIKTSANDLVETLMKCQPSYIRTIKPNQTKSPNDYDQQMVLHQIKYLGLQENIRIRRAGFAYRQAFDTFAQRFAVLSGKTSYAGEYTWQGDDKSACEQILKDTNIPSSEYQMGTSKVFIKNPETLFALEDMRDKFWDTMATRIQRAWRSYVRRRSEAAACIQKLWNRNKVNMELERVRNEGTKLLQGKKQRRRYSILGSRKFYGDYLSASKPNGTLWNTCGLSQNDHVIFSMRCEVLVHKLGRTSKPSPRQLVLTKKNLYLVITKIVDQKLTQQVEKKFAVSSIDSVGLTNLQDDWVAIRNKSSQNGDMFLRCFFKTEFITTLKRINRNIQVIVGPTIQYCRKPGKVQTVKTAKDETTKDYDYYKSGTIHVGTGLPPTSKSKPFPRLATGGSTAAARGPRPVVQNKPAATKPVSMPAAKSKPAPMANPVSTAQQTQNRPPAPAMQARPNTTQAAAPVTSTTTTIKQATTVSASKPAPSTVTSAASSPSNISKPSAPVANNVSKPSAVPPPPPPPPAEVEKKDLYLALYDFAGRSPNEMTIKKDEIIEIVQKEPSGWWLALKNGAEGWVPATYVTEYKGSTPQTTASSTNVAAQANNNASPAEVNNLAGSLADALRMRASAVRGSDEEEDW.

A disordered region spans residues 1 to 26 (MAILKRTNRAKAATAAAPNSTGKSNG). The span at 10 to 19 (AKAATAAAPN) shows a compositional bias: low complexity. ATP-binding positions include 17–24 (APNSTGKS) and 133–140 (GESGAGKT). Positions 40 to 720 (VGVDDLTLLS…TLFALEDMRD (681 aa)) constitute a Myosin motor domain. S361 carries the phosphoserine modification. Phosphotyrosine is present on Y363. Positions 409 to 491 (SIGILDIYGF…PGLFAAMNDA (83 aa)) are actin-binding. IQ domains are found at residues 724–744 (DTMATRIQRAWRSYVRRRSEA) and 745–770 (AACIQKLWNRNKVNMELERVRNEGTK). S742 is subject to Phosphoserine. A TH1 domain is found at 778 to 964 (RRRYSILGSR…TIHVGTGLPP (187 aa)). S782 carries the post-translational modification Phosphoserine. A disordered region spans residues 961–1105 (GLPPTSKSKP…PPPPPPPAEV (145 aa)). The segment covering 998 to 1013 (KPVSMPAAKSKPAPMA) has biased composition (low complexity). Residues 1015–1025 (PVSTAQQTQNR) show a composition bias toward polar residues. Residues 1045–1075 (TSTTTTIKQATTVSASKPAPSTVTSAASSPS) show a composition bias toward low complexity. Residues 1076–1088 (NISKPSAPVANNV) show a composition bias toward polar residues. Positions 1093 to 1103 (AVPPPPPPPPA) are enriched in pro residues. An SH3 domain is found at 1106-1165 (EKKDLYLALYDFAGRSPNEMTIKKDEIIEIVQKEPSGWWLALKNGAEGWVPATYVTEYKG). S1211 carries the phosphoserine modification.

Belongs to the TRAFAC class myosin-kinesin ATPase superfamily. Myosin family. Interacts with cam2. Interacts (via SH3 domain) with vrp1. In terms of processing, phosphorylation of the TEDS site (Ser-361) is required for the polarization of the actin cytoskeleton. Phosphorylation probably activates the myosin-I ATPase activity.

Its subcellular location is the cytoplasm. The protein localises to the cytoskeleton. It is found in the actin patch. In terms of biological role, type-I myosin implicated in the organization of the actin cytoskeleton. Required for proper actin cytoskeleton polarization. At the cell cortex, assembles in patch-like structures together with proteins from the actin-polymerizing machinery and promotes actin assembly. Functions as actin nucleation-promoting factor (NPF) for the Arp2/3 complex. Contributes to proper septation by transporting vesicles containing septal material to the division site and is involved in the formation of sterol-rich membrane domains at the cell division site. Required also for mating. This Schizosaccharomyces pombe (strain 972 / ATCC 24843) (Fission yeast) protein is Myosin-1 (myo1).